Reading from the N-terminus, the 205-residue chain is 3-isopropylmalate dehydratase small subunit (205 aa).

This sequence belongs to the LeuD family. LeuD type 1 subfamily. In terms of assembly, heterodimer of LeuC and LeuD.

The catalysed reaction is (2R,3S)-3-isopropylmalate = (2S)-2-isopropylmalate. It functions in the pathway amino-acid biosynthesis; L-leucine biosynthesis; L-leucine from 3-methyl-2-oxobutanoate: step 2/4. Functionally, catalyzes the isomerization between 2-isopropylmalate and 3-isopropylmalate, via the formation of 2-isopropylmaleate. In Christiangramia forsetii (strain DSM 17595 / CGMCC 1.15422 / KT0803) (Gramella forsetii), this protein is 3-isopropylmalate dehydratase small subunit.